We begin with the raw amino-acid sequence, 152 residues long: Orientotoxin-1 (152 aa).

As to expression, expressed by the venom gland.

The protein resides in the secreted. The enzyme catalyses a 1-acyl-sn-glycero-3-phosphocholine + H2O = sn-glycerol 3-phosphocholine + a fatty acid + H(+). In terms of biological role, neurotoxin of presynaptic effect which degrades lysophospholipids. This chain is Orientotoxin-1, found in Vespa orientalis (Oriental hornet).